We begin with the raw amino-acid sequence, 131 residues long: Large-conductance mechanosensitive channel (131 aa).

A run of 3 helical transmembrane segments spans residues 14 to 34 (IMDLAIGVVIGGAFGKIVTSL), 38 to 58 (IIMPLVGLLLGGLDFSGLAVT), and 67 to 87 (GSFIQTIVNFFIISFSIFIVI).

It belongs to the MscL family. In terms of assembly, homopentamer.

It localises to the cell membrane. In terms of biological role, channel that opens in response to stretch forces in the membrane lipid bilayer. May participate in the regulation of osmotic pressure changes within the cell. This chain is Large-conductance mechanosensitive channel, found in Bacillus velezensis (strain DSM 23117 / BGSC 10A6 / LMG 26770 / FZB42) (Bacillus amyloliquefaciens subsp. plantarum).